Consider the following 170-residue polypeptide: Peptide deformylase (170 aa).

Residues cysteine 91 and histidine 133 each contribute to the Fe cation site. Glutamate 134 is a catalytic residue. Position 137 (histidine 137) interacts with Fe cation.

This sequence belongs to the polypeptide deformylase family. Fe(2+) is required as a cofactor.

The enzyme catalyses N-terminal N-formyl-L-methionyl-[peptide] + H2O = N-terminal L-methionyl-[peptide] + formate. In terms of biological role, removes the formyl group from the N-terminal Met of newly synthesized proteins. Requires at least a dipeptide for an efficient rate of reaction. N-terminal L-methionine is a prerequisite for activity but the enzyme has broad specificity at other positions. This is Peptide deformylase from Pectobacterium carotovorum subsp. carotovorum (strain PC1).